We begin with the raw amino-acid sequence, 546 residues long: Cryptochrome DASH, chloroplastic/mitochondrial (546 aa).

A Photolyase/cryptochrome alpha/beta domain is found at 4–151 (TRVVIWFRND…TMERHWGSTL (148 aa)). Positions 497-546 (PRRDFTEMGSPPGPRRGGGGGGRGRGRPGGSTPNRGTKARVASVYDTVYG) are disordered. A compositionally biased stretch (gly residues) spans 511 to 525 (RRGGGGGGRGRGRPG).

The protein belongs to the DNA photolyase class-1 family. FAD is required as a cofactor. The cofactor is (6R)-5,10-methylene-5,6,7,8-tetrahydrofolate.

The protein resides in the plastid. It localises to the chloroplast. It is found in the mitochondrion. In terms of biological role, may have a photoreceptor function. Binds ss- and ds-DNA in a sequence non-specific manner, lacks photolyase activity. The chain is Cryptochrome DASH, chloroplastic/mitochondrial from Ostreococcus tauri.